A 170-amino-acid chain; its full sequence is Adenine phosphoribosyltransferase (170 aa).

This sequence belongs to the purine/pyrimidine phosphoribosyltransferase family. In terms of assembly, homodimer.

It is found in the cytoplasm. The enzyme catalyses AMP + diphosphate = 5-phospho-alpha-D-ribose 1-diphosphate + adenine. The protein operates within purine metabolism; AMP biosynthesis via salvage pathway; AMP from adenine: step 1/1. Its function is as follows. Catalyzes a salvage reaction resulting in the formation of AMP, that is energically less costly than de novo synthesis. This chain is Adenine phosphoribosyltransferase, found in Thermosynechococcus vestitus (strain NIES-2133 / IAM M-273 / BP-1).